A 210-amino-acid polypeptide reads, in one-letter code: Na(+)-translocating NADH-quinone reductase subunit D (210 aa).

Helical transmembrane passes span 14-34 (PIIN…ALAV), 42-62 (LVMT…ISLI), 72-92 (IIVQ…VLQA), 96-116 (AISK…IVMG), 131-151 (FMDG…VGVV), and 178-198 (NGLL…IWLI).

Belongs to the NqrDE/RnfAE family. In terms of assembly, composed of six subunits; NqrA, NqrB, NqrC, NqrD, NqrE and NqrF.

Its subcellular location is the cell inner membrane. The catalysed reaction is a ubiquinone + n Na(+)(in) + NADH + H(+) = a ubiquinol + n Na(+)(out) + NAD(+). Functionally, NQR complex catalyzes the reduction of ubiquinone-1 to ubiquinol by two successive reactions, coupled with the transport of Na(+) ions from the cytoplasm to the periplasm. NqrA to NqrE are probably involved in the second step, the conversion of ubisemiquinone to ubiquinol. This chain is Na(+)-translocating NADH-quinone reductase subunit D, found in Shewanella frigidimarina (strain NCIMB 400).